The chain runs to 858 residues: Volume-regulated anion channel subunit LRRC8D (858 aa).

At 1-22 (MFTLAEVASLNDIQPTYRILKP) the chain is on the cytoplasmic side. Residues 23–48 (WWDVFMDYLAVVMLMVAIFAGTMQLT) traverse the membrane as a helical segment. Over 49–163 (KDQVVCLPVL…YHLALPWYSK (115 aa)) the chain is Extracellular. Cysteine 54 and cysteine 354 are oxidised to a cystine. The chain crosses the membrane as a helical span at residues 164–182 (YFPYLALIHTIILMVSSNF). At 183-308 (WFKYPKTCSK…EDSDLIYKLY (126 aa)) the chain is on the cytoplasmic side. Residues 221–251 (SEENKQRITGAQTLPKHVSTSSDEGSPSAST) form a disordered region. Residues 227-251 (RITGAQTLPKHVSTSSDEGSPSAST) show a composition bias toward polar residues. 3 positions are modified to phosphoserine: serine 241, serine 242, and serine 246. A helical transmembrane segment spans residues 309-328 (VVQTVIKTAKFIFILCYTAN). Topologically, residues 329–360 (FVNAISFEHVCKPKVEHLIGYEVFECTHNMAY) are extracellular. The chain crosses the membrane as a helical span at residues 361 to 386 (MLKKLLISYISIICVYGFICLYTLFW). The Cytoplasmic segment spans residues 387-858 (LFRIPLKEYS…DINIPFANGI (472 aa)). 13 LRR repeats span residues 514–534 (NLQE…AFSF), 538–559 (HLRC…VYLL), 561–582 (NLRE…IGLE), 589–609 (HLKI…ITDV), 612–632 (HLTK…NSLK), 636–657 (NVAE…IFSL), 659–680 (NLQE…ISFQ), 684–705 (RLTC…ITHV), 707–728 (NLES…VFSL), 730–751 (KLRC…IGLL), 753–774 (NLQH…LFKC), 776–797 (KLRT…VGQL), and 799–820 (QLTQ…LGQC).

The protein belongs to the LRRC8 family. As to quaternary structure, heterohexamer; oligomerizes with other LRRC8 proteins (LRRC8A, LRRC8B, LRRC8C and/or LRRC8E) to form a heterohexamer. In vivo, the subunit composition may depend primarily on expression levels, and heterooligomeric channels containing various proportions of the different LRRC8 proteins may coexist.

It localises to the cell membrane. It is found in the endoplasmic reticulum membrane. It carries out the reaction chloride(in) = chloride(out). The catalysed reaction is iodide(out) = iodide(in). It catalyses the reaction taurine(out) = taurine(in). Non-essential component of the volume-regulated anion channel (VRAC, also named VSOAC channel), an anion channel required to maintain a constant cell volume in response to extracellular or intracellular osmotic changes. The VRAC channel conducts iodide better than chloride and can also conduct organic osmolytes like taurine. Plays a redundant role in the efflux of amino acids, such as aspartate, in response to osmotic stress. LRRC8A and LRRC8D are required for the uptake of the drug cisplatin. Channel activity requires LRRC8A plus at least one other family member (LRRC8B, LRRC8C, LRRC8D or LRRC8E); channel characteristics depend on the precise subunit composition. Also acts as a regulator of glucose-sensing in pancreatic beta cells: VRAC currents, generated in response to hypotonicity- or glucose-induced beta cell swelling, depolarize cells, thereby causing electrical excitation, leading to increase glucose sensitivity and insulin secretion. VRAC channels containing LRRC8D inhibit transport of immunoreactive cyclic dinucleotide GMP-AMP (2'-3'-cGAMP), an immune messenger produced in response to DNA virus in the cytosol. Mediates the import of the antibiotic blasticidin-S into the cell. The protein is Volume-regulated anion channel subunit LRRC8D of Homo sapiens (Human).